We begin with the raw amino-acid sequence, 972 residues long: Isoleucine--tRNA ligase (972 aa).

The short motif at 63 to 73 (PYANGNIHIGH) is the 'HIGH' region element. Residue Glu-603 coordinates L-isoleucyl-5'-AMP. The short motif at 644-648 (KMSKS) is the 'KMSKS' region element. Lys-647 is an ATP binding site.

It belongs to the class-I aminoacyl-tRNA synthetase family. IleS type 1 subfamily. Monomer.

Its subcellular location is the cytoplasm. The catalysed reaction is tRNA(Ile) + L-isoleucine + ATP = L-isoleucyl-tRNA(Ile) + AMP + diphosphate. In terms of biological role, catalyzes the attachment of isoleucine to tRNA(Ile). As IleRS can inadvertently accommodate and process structurally similar amino acids such as valine, to avoid such errors it has two additional distinct tRNA(Ile)-dependent editing activities. One activity is designated as 'pretransfer' editing and involves the hydrolysis of activated Val-AMP. The other activity is designated 'posttransfer' editing and involves deacylation of mischarged Val-tRNA(Ile). This chain is Isoleucine--tRNA ligase, found in Brucella melitensis biotype 1 (strain ATCC 23456 / CCUG 17765 / NCTC 10094 / 16M).